Consider the following 199-residue polypeptide: Ribonuclease HII (199 aa).

The RNase H type-2 domain occupies 10 to 199; that stretch reads HLVAGVDEVG…VKRALGLASN (190 aa). Residues Asp16, Glu17, and Asp108 each contribute to the a divalent metal cation site.

This sequence belongs to the RNase HII family. Requires Mn(2+) as cofactor. Mg(2+) is required as a cofactor.

It is found in the cytoplasm. It carries out the reaction Endonucleolytic cleavage to 5'-phosphomonoester.. Functionally, endonuclease that specifically degrades the RNA of RNA-DNA hybrids. The polypeptide is Ribonuclease HII (Klebsiella pneumoniae (strain 342)).